The sequence spans 241 residues: Putative ABC transporter ATP-binding protein CA_C0773 (241 aa).

The region spanning 2 to 241 (IKLEKVSFTY…REFLMECNII (240 aa)) is the ABC transporter domain. Residue 34-41 (GPNGSGKS) participates in ATP binding.

It belongs to the ABC transporter superfamily.

It is found in the cell membrane. In terms of biological role, probably part of an ABC transporter complex. Responsible for energy coupling to the transport system. In Clostridium acetobutylicum (strain ATCC 824 / DSM 792 / JCM 1419 / IAM 19013 / LMG 5710 / NBRC 13948 / NRRL B-527 / VKM B-1787 / 2291 / W), this protein is Putative ABC transporter ATP-binding protein CA_C0773.